A 162-amino-acid polypeptide reads, in one-letter code: Phosphopantetheine adenylyltransferase (162 aa).

Position 9 (serine 9) interacts with substrate. ATP is bound by residues 9–10 and histidine 17; that span reads SF. Substrate is bound by residues lysine 41, leucine 77, and lysine 91. Residues 92–94, glutamate 102, and 126–132 contribute to the ATP site; these read GLR and YAFLSSS.

This sequence belongs to the bacterial CoaD family. In terms of assembly, homohexamer. It depends on Mg(2+) as a cofactor.

Its subcellular location is the cytoplasm. It catalyses the reaction (R)-4'-phosphopantetheine + ATP + H(+) = 3'-dephospho-CoA + diphosphate. It functions in the pathway cofactor biosynthesis; coenzyme A biosynthesis; CoA from (R)-pantothenate: step 4/5. In terms of biological role, reversibly transfers an adenylyl group from ATP to 4'-phosphopantetheine, yielding dephospho-CoA (dPCoA) and pyrophosphate. The protein is Phosphopantetheine adenylyltransferase of Parafrankia sp. (strain EAN1pec).